Reading from the N-terminus, the 241-residue chain is Probable 2-phosphosulfolactate phosphatase (241 aa).

This sequence belongs to the ComB family. Mg(2+) serves as cofactor.

The catalysed reaction is (2R)-O-phospho-3-sulfolactate + H2O = (2R)-3-sulfolactate + phosphate. The polypeptide is Probable 2-phosphosulfolactate phosphatase (Microcystis aeruginosa (strain NIES-843 / IAM M-2473)).